The primary structure comprises 354 residues: Uroporphyrinogen decarboxylase (354 aa).

Substrate-binding positions include 27 to 31, D77, Y154, S209, and H327; that span reads RQAGR.

Belongs to the uroporphyrinogen decarboxylase family. As to quaternary structure, homodimer.

The protein resides in the cytoplasm. The catalysed reaction is uroporphyrinogen III + 4 H(+) = coproporphyrinogen III + 4 CO2. Its pathway is porphyrin-containing compound metabolism; protoporphyrin-IX biosynthesis; coproporphyrinogen-III from 5-aminolevulinate: step 4/4. Catalyzes the decarboxylation of four acetate groups of uroporphyrinogen-III to yield coproporphyrinogen-III. This chain is Uroporphyrinogen decarboxylase, found in Pseudomonas syringae pv. syringae (strain B728a).